The chain runs to 626 residues: Phosphomethylpyrimidine synthase (626 aa).

Residues 1-27 are disordered; the sequence is MSKQEKAISLSESAQVDQQSVQPLPNS. The span at 10–25 shows a compositional bias: polar residues; it reads LSESAQVDQQSVQPLP. Residues asparagine 232, methionine 261, tyrosine 290, histidine 326, 346 to 348, 387 to 390, and glutamate 426 contribute to the substrate site; these read SRG and DGLR. A Zn(2+)-binding site is contributed by histidine 430. Tyrosine 453 serves as a coordination point for substrate. Histidine 494 contributes to the Zn(2+) binding site. [4Fe-4S] cluster is bound by residues cysteine 574, cysteine 577, and cysteine 582.

The protein belongs to the ThiC family. In terms of assembly, homodimer. The cofactor is [4Fe-4S] cluster.

The catalysed reaction is 5-amino-1-(5-phospho-beta-D-ribosyl)imidazole + S-adenosyl-L-methionine = 4-amino-2-methyl-5-(phosphooxymethyl)pyrimidine + CO + 5'-deoxyadenosine + formate + L-methionine + 3 H(+). It functions in the pathway cofactor biosynthesis; thiamine diphosphate biosynthesis. Functionally, catalyzes the synthesis of the hydroxymethylpyrimidine phosphate (HMP-P) moiety of thiamine from aminoimidazole ribotide (AIR) in a radical S-adenosyl-L-methionine (SAM)-dependent reaction. This is Phosphomethylpyrimidine synthase from Pseudomonas entomophila (strain L48).